Reading from the N-terminus, the 326-residue chain is Balbiani ring protein 1 (326 aa).

The segment covering 1–33 (PSKSGPRPSKSGPRPSKSGPRPSKSGPRPSKSG) has biased composition (low complexity). Residues 1-119 (PSKSGPRPSK…RESPVCDDAM (119 aa)) form a disordered region. Over residues 34–51 (PRPEKCGSAMRKAEAEKC) the composition is skewed to basic and acidic residues. The span at 93 to 102 (VTPTPEVPTT) shows a compositional bias: low complexity. Over residues 107–119 (SESRESPVCDDAM) the composition is skewed to basic and acidic residues.

In terms of tissue distribution, salivary gland.

It localises to the secreted. Used by the larvae to construct a supramolecular structure, the larval tube. This chain is Balbiani ring protein 1 (BR1), found in Chironomus pallidivittatus (Midge).